A 299-amino-acid polypeptide reads, in one-letter code: 4-sulfomuconolactone hydrolase (299 aa).

It belongs to the metallo-dependent hydrolases superfamily. Sulfomuconolactone hydrolase family. In terms of assembly, monomer. It depends on Zn(2+) as a cofactor.

The catalysed reaction is 4-sulfomuconolactone + H2O = maleylacetate + sulfite + 2 H(+). Involved in the degradation of 4-sulfocatechol which is a central intermediate in the degradation of substituted sulfonated benzenes. Catalyzes the hydrolytical desulfonation of 4-sulfomuconolactone to yield maleylacetate. The chain is 4-sulfomuconolactone hydrolase from Rhizobium radiobacter (Agrobacterium tumefaciens).